Consider the following 623-residue polypeptide: Transketolase (623 aa).

The residue at position 1 (Met-1) is an N-acetylmethionine. N6-acetyllysine occurs at positions 6 and 11. Position 37 (His-37) interacts with substrate. Positions 40 and 77 each coordinate thiamine diphosphate. Ser-104 is modified (phosphoserine). 123–125 (GSL) serves as a coordination point for thiamine diphosphate. At Lys-144 the chain carries N6-acetyllysine. Asp-155 serves as a coordination point for Mg(2+). Gly-156 and Asn-185 together coordinate thiamine diphosphate. Mg(2+) is bound by residues Asn-185 and Leu-187. Residues Lys-204, Lys-232, and Lys-241 each carry the N6-acetyllysine modification. Residues Lys-244 and His-258 each coordinate thiamine diphosphate. His-258 contacts substrate. Lys-260 carries the N6-acetyllysine modification. The residue at position 275 (Tyr-275) is a Phosphotyrosine. At Thr-287 the chain carries Phosphothreonine. The residue at position 295 (Ser-295) is a Phosphoserine. The substrate site is built by Arg-318 and Ser-345. Ser-345 is subject to Phosphoserine. A Glycyl lysine isopeptide (Lys-Gly) (interchain with G-Cter in SUMO2) cross-link involves residue Lys-352. The Proton donor role is filled by Glu-366. Phe-392 contacts thiamine diphosphate. Residues His-416 and Asp-424 each coordinate substrate. Gln-428 contributes to the thiamine diphosphate binding site. Position 474 (Arg-474) interacts with substrate. An N6-acetyllysine mark is found at Lys-538 and Lys-603.

Belongs to the transketolase family. As to quaternary structure, homodimer. Mg(2+) is required as a cofactor. Ca(2+) serves as cofactor. It depends on Mn(2+) as a cofactor. The cofactor is Co(2+). Requires thiamine diphosphate as cofactor.

The catalysed reaction is D-sedoheptulose 7-phosphate + D-glyceraldehyde 3-phosphate = aldehydo-D-ribose 5-phosphate + D-xylulose 5-phosphate. In terms of biological role, catalyzes the transfer of a two-carbon ketol group from a ketose donor to an aldose acceptor, via a covalent intermediate with the cofactor thiamine pyrophosphate. This chain is Transketolase (Tkt), found in Mus musculus (Mouse).